The chain runs to 451 residues: Prenyltransferase anuH (451 aa).

Dimethylallyl diphosphate-binding residues include Arg-105, Lys-189, Tyr-191, Lys-257, Tyr-259, and Tyr-422.

The protein belongs to the tryptophan dimethylallyltransferase family.

The catalysed reaction is (8S)-annullatin E + dimethylallyl diphosphate = (8S)-annullatin J + diphosphate. Its pathway is secondary metabolite biosynthesis. In terms of biological role, cytochrome P450 monooxygenase; part of the gene cluster that mediates the biosynthesis of annullatin D, an alkylated aromatic polyketide with a fused dihydrobenzofuran lactone ring system that exhibits potent agonistic activities toward the cannabinoid receptors. Within the pathway, anuH uses dimethylallyl diphosphate (DMAPP) to prenylate (8S)-annullatin E to produce (8S)-annullatin J. Geranyl and farnesyl diphosphate are not consumed by anuH for prenylation. 2-hydroxymethyl-3-pentylphenol, without the hydroxyl group at the side chain, is also accepted by anuH, but only with low conversion yield. The annullatin backbone 2-hydroxymethyl-3-pentylphenol is assembled from one acetyl-CoA starter unit and 5 malonyl-CoA elongation units by cooperation of the highly reducing polyketide synthase anuA, the short-chain dehydrogenase anuB and the oxidoreductase anuC, before being hydroxylated at the C-5 alkyl chain by the cytochrome P450 monooxygenase anuE to form (8S)-annullatin E. The prenyltransferase anuH subsequently installs one isoprenyl group at the benzene ring to form (8S)-annullatin J. Enzymatic or nonenzymatic dihydro-benzofuran ring formation between the prenyl and the phenolic hydroxyl groups in (8S)-annullatin J results in two diastereomers (2S,9S)-annullatin H and compound 12. The intermediate (2S,9S)-annullatin H is then converted to (2S,9S)-annullatin D by the FAD-linked oxidoreductase anuG-catalyzed five-member lactone ring formation. The isomer 12 acts as a substrate for the short-chain dehydrogenase anuF and is oxidized to (2R)-annullatin F, which is subsequently acetylated by an acetyltransferase leading to (2R)-annullatin G formation. The remaining enzymes identified within the cluster, anuD, anuI and anuJ, seem not to be involved in annullatin biosynthesis. The protein is Prenyltransferase anuH of Penicillium roqueforti (strain FM164).